A 322-amino-acid chain; its full sequence is Formimidoylglutamase (322 aa).

Residues His-130, Asp-156, His-158, Asp-160, Cys-245, and Asp-247 each coordinate Mn(2+).

The protein belongs to the arginase family. It depends on Mn(2+) as a cofactor.

It carries out the reaction N-formimidoyl-L-glutamate + H2O = formamide + L-glutamate. It participates in amino-acid degradation; L-histidine degradation into L-glutamate; L-glutamate from N-formimidoyl-L-glutamate (hydrolase route): step 1/1. Its function is as follows. Catalyzes the conversion of N-formimidoyl-L-glutamate to L-glutamate and formamide. In Lysinibacillus sphaericus (strain C3-41), this protein is Formimidoylglutamase.